The chain runs to 91 residues: Alpha-elapitoxin-Oh2b (91 aa).

The first 21 residues, Met1–Thr21, serve as a signal peptide directing secretion. Cystine bridges form between Cys24–Cys41, Cys34–Cys62, Cys47–Cys51, Cys66–Cys77, and Cys78–Cys83.

This sequence belongs to the three-finger toxin family. Long-chain subfamily. Type II alpha-neurotoxin sub-subfamily. In terms of assembly, monomer. Expressed by the venom gland.

Its subcellular location is the secreted. Functionally, binds with high affinity to muscular (alpha-1/CHRNA1) and neuronal (alpha-7/CHRNA7) nicotinic acetylcholine receptor (nAChR) and inhibits acetylcholine from binding to the receptor, thereby impairing neuromuscular and neuronal transmission. Recombinant LNTX1 leads to a functional block of the muscle-type acetylcholine receptors. Has a cytotoxic activity. This neurotoxin is lethal. This Ophiophagus hannah (King cobra) protein is Alpha-elapitoxin-Oh2b.